The primary structure comprises 256 residues: Sugar fermentation stimulation protein homolog (256 aa).

It belongs to the SfsA family.

This chain is Sugar fermentation stimulation protein homolog, found in Prochlorococcus marinus (strain MIT 9211).